Reading from the N-terminus, the 313-residue chain is MTQLPILLLLISLVYATPSPQTSKKIGDDATISCSRNNTNYYVVMSAWYKEPNSIILLAAKSDVLYFDNYTKDKISYDSPYDDLVTTITIKSLTAGDAGTYICAFFMTSTTNDTDKVDYEEYSIELIVNTDSESTIDIILSGSTPETISEKPEDIDNSNCSSVFEITTPEPITDNVDDHTDTVTYTSDSINTVNASSGESTTDEIPEPITDKEEDHTVTDTVSYTTVSTSSGIVTTKSTTDDADLYDTYNDNDTVPPTTVGGSTTSISNYKTKDFVEIFGITTLIILSAVAIFCITYYICNKHPRKYKTENKV.

Positions 1-16 are cleaved as a signal peptide; the sequence is MTQLPILLLLISLVYA. Residues 17–274 lie on the Virion surface side of the membrane; the sequence is TPSPQTSKKI…TSISNYKTKD (258 aa). N-linked (GlcNAc...) asparagine; by host glycans are attached at residues N37, N69, N112, N159, N194, and N252. Residues 275–295 traverse the membrane as a helical segment; sequence FVEIFGITTLIILSAVAIFCI. Topologically, residues 296 to 313 are intravirion; sequence TYYICNKHPRKYKTENKV.

The protein belongs to the orthopoxvirus OPG185 family. In terms of assembly, heterodimerizes with OPG040. The heterodimer OPG185-OPG040 interacts with components of the entry fusion complex OPG143 and OPG094. Heterodimer with C3/VPC protein; disulfide-linked. Post-translationally, glycosylated; contains phosphate and sulfate-substituted glycans. O-glycosylation is required for hemagglutination and hemadsorption activities of infected cell membranes.

The protein localises to the virion membrane. It is found in the host membrane. Functionally, prevents cell to cell fusion by interacting with and directing the viral OPG040 protein on the host plasma membrane. The OPG185-OPG040 complex associates with components of the entry fusion complex (EFC) presumably to avoid superinfection and syncytium formation. Via its interaction with C3/VCP protein, protects the infected cell and probably also the extracellular enveloped virus from complement attack. This Monkeypox virus protein is Protein OPG185 (OPG185).